The chain runs to 384 residues: Substance-K receptor (384 aa).

At 1 to 32 (MGAHASVTDTNILSGLESNATGVTAFSMPGWQ) the chain is on the extracellular side. Asn19 carries an N-linked (GlcNAc...) asparagine glycan. Residues 33 to 56 (LALWATAYLALVLVAVTGNATVIW) form a helical membrane-spanning segment. Residues 57 to 69 (IILAHERMRTVTN) are Cytoplasmic-facing. A helical membrane pass occupies residues 70-90 (YFIINLALADLCMAAFNATFN). Topologically, residues 91–107 (FIYASHNIWYFGSTFCY) are extracellular. A disulfide bridge connects residues Cys106 and Cys181. Residues 108–129 (FQNLFPVTAMFVSIYSMTAIAA) form a helical membrane-spanning segment. The Cytoplasmic segment spans residues 130 to 149 (DRYMAIVHPFQPRLSAPSTK). A helical membrane pass occupies residues 150–170 (AVIAVIWLVALALASPQCFYS). The Extracellular portion of the chain corresponds to 171–196 (TITVDQGATKCVVAWPNDNGGKMLLL). A helical membrane pass occupies residues 197–218 (YHLVVFVLIYFLPLVVMFAAYS). At 219 to 251 (VIGLTLWKRAVPRHQAHGANLRHLQAKKKFVKA) the chain is on the cytoplasmic side. A helical membrane pass occupies residues 252–272 (MVLVVVTFAICWLPYHLYFIL). Topologically, residues 273 to 290 (GTFQEDIYYRKFIQQVYL) are extracellular. The helical transmembrane segment at 291–310 (ALFWLAMSSTMYNPIIYCCL) threads the bilayer. Topologically, residues 311 to 384 (NHRFRSGFRL…GPQDGEPAGP (74 aa)) are cytoplasmic. Cys324 carries the S-palmitoyl cysteine lipid modification. The disordered stretch occupies residues 365–384 (HSEATNGQVGGPQDGEPAGP).

Belongs to the G-protein coupled receptor 1 family.

The protein localises to the cell membrane. In terms of biological role, this is a receptor for the tachykinin neuropeptide substance K (neurokinin A). It is associated with G proteins that activate a phosphatidylinositol-calcium second messenger system. The rank order of affinity of this receptor to tachykinins is: substance K &gt; neuromedin-K &gt; substance P. The polypeptide is Substance-K receptor (Tacr2) (Mus musculus (Mouse)).